The sequence spans 506 residues: ATP synthase subunit alpha (506 aa).

ATP is bound at residue 171–178; that stretch reads GDRQTGKT.

The protein belongs to the ATPase alpha/beta chains family. In terms of assembly, F-type ATPases have 2 components, CF(1) - the catalytic core - and CF(0) - the membrane proton channel. CF(1) has five subunits: alpha(3), beta(3), gamma(1), delta(1), epsilon(1). CF(0) has four main subunits: a(1), b(1), b'(1) and c(9-12).

The protein localises to the cellular thylakoid membrane. The enzyme catalyses ATP + H2O + 4 H(+)(in) = ADP + phosphate + 5 H(+)(out). Produces ATP from ADP in the presence of a proton gradient across the membrane. The alpha chain is a regulatory subunit. The chain is ATP synthase subunit alpha from Nostoc sp. (strain PCC 7120 / SAG 25.82 / UTEX 2576).